A 176-amino-acid polypeptide reads, in one-letter code: Ribosome maturation factor RimM (176 aa).

A PRC barrel domain is found at 94-176 (KDEFFYFEIL…RFGFEILQNS (83 aa)).

Belongs to the RimM family. In terms of assembly, binds ribosomal protein uS19.

Its subcellular location is the cytoplasm. Functionally, an accessory protein needed during the final step in the assembly of 30S ribosomal subunit, possibly for assembly of the head region. Essential for efficient processing of 16S rRNA. May be needed both before and after RbfA during the maturation of 16S rRNA. It has affinity for free ribosomal 30S subunits but not for 70S ribosomes. The polypeptide is Ribosome maturation factor RimM (Campylobacter hominis (strain ATCC BAA-381 / DSM 21671 / CCUG 45161 / LMG 19568 / NCTC 13146 / CH001A)).